Consider the following 365-residue polypeptide: Mitogen-activated protein kinase 13 (365 aa).

One can recognise a Protein kinase domain in the interval 25 to 308 (YVSPTHVGSG…AAQALTHPFF (284 aa)). Position 31-39 (31-39 (VGSGAYGSV)) interacts with ATP. The residue at position 47 (S47) is a Phosphoserine. K54 lines the ATP pocket. The Proton acceptor role is filled by D150. Residue T180 is modified to Phosphothreonine; by MAP2K3, MAP2K4, MAP2K6 and MAP2K7. Positions 180–182 (TGY) match the TXY motif. Y182 is subject to Phosphotyrosine; by MAP2K3, MAP2K4, MAP2K6 and MAP2K7. Residue S350 is modified to Phosphoserine.

It belongs to the protein kinase superfamily. CMGC Ser/Thr protein kinase family. MAP kinase subfamily. As to quaternary structure, interacts with MAPK8IP2. It depends on Mg(2+) as a cofactor. In terms of processing, dually phosphorylated on Thr-180 and Tyr-182 by MAP2K3/MKK3, MAP2K4/MKK4, MAP2K6/MKK6 and MAP2K7/MKK7, which activates the enzyme. Dephosphorylated by dual specificity phosphatase DUSP1. In terms of tissue distribution, expressed in testes, pancreas, small intestine, lung and kidney. Abundant in macrophages, also present in neutrophils, CD4+ T-cells, and endothelial cells.

The catalysed reaction is L-seryl-[protein] + ATP = O-phospho-L-seryl-[protein] + ADP + H(+). It catalyses the reaction L-threonyl-[protein] + ATP = O-phospho-L-threonyl-[protein] + ADP + H(+). With respect to regulation, activated by phosphorylation on threonine and tyrosine by dual specificity kinases, MAP2K3/MKK3, MAP2K6/MKK6, MAP2K4/MKK4 and MAP2K7/MKK7. Activation by ultraviolet radiation, hyperosmotic shock, anisomycin or by TNF-alpha is mediated by MAP2K3/MKK3. Inhibited by dual specificity phosphatase DUSP1. Serine/threonine kinase which acts as an essential component of the MAP kinase signal transduction pathway. MAPK13 is one of the four p38 MAPKs which play an important role in the cascades of cellular responses evoked by extracellular stimuli such as pro-inflammatory cytokines or physical stress leading to direct activation of transcription factors such as ELK1 and ATF2. Accordingly, p38 MAPKs phosphorylate a broad range of proteins and it has been estimated that they may have approximately 200 to 300 substrates each. MAPK13 is one of the less studied p38 MAPK isoforms. Some of the targets are downstream kinases such as MAPKAPK2, which are activated through phosphorylation and further phosphorylate additional targets. Plays a role in the regulation of protein translation by phosphorylating and inactivating EEF2K. Involved in cytoskeletal remodeling through phosphorylation of MAPT and STMN1. Mediates UV irradiation induced up-regulation of the gene expression of CXCL14. Plays an important role in the regulation of epidermal keratinocyte differentiation, apoptosis and skin tumor development. Phosphorylates the transcriptional activator MYB in response to stress which leads to rapid MYB degradation via a proteasome-dependent pathway. MAPK13 also phosphorylates and down-regulates PRKD1 during regulation of insulin secretion in pancreatic beta cells. This Homo sapiens (Human) protein is Mitogen-activated protein kinase 13 (MAPK13).